The following is a 442-amino-acid chain: NADH-quinone oxidoreductase subunit D (442 aa).

Belongs to the complex I 49 kDa subunit family. As to quaternary structure, NDH-1 is composed of 14 different subunits. Subunits NuoB, C, D, E, F, and G constitute the peripheral sector of the complex.

Its subcellular location is the cell membrane. It catalyses the reaction a quinone + NADH + 5 H(+)(in) = a quinol + NAD(+) + 4 H(+)(out). Functionally, NDH-1 shuttles electrons from NADH, via FMN and iron-sulfur (Fe-S) centers, to quinones in the respiratory chain. The immediate electron acceptor for the enzyme in this species is believed to be a menaquinone. Couples the redox reaction to proton translocation (for every two electrons transferred, four hydrogen ions are translocated across the cytoplasmic membrane), and thus conserves the redox energy in a proton gradient. The polypeptide is NADH-quinone oxidoreductase subunit D (Mycolicibacterium smegmatis (strain ATCC 700084 / mc(2)155) (Mycobacterium smegmatis)).